The chain runs to 399 residues: Leu/Ile/Val-binding protein homolog 7 (399 aa).

Positions 1 to 22 (MEKHLIALSVAALLAGAAPASA) are cleaved as a signal peptide.

This sequence belongs to the leucine-binding protein family.

Component of an amino-acid transport system. The sequence is that of Leu/Ile/Val-binding protein homolog 7 from Brucella suis biovar 1 (strain 1330).